Reading from the N-terminus, the 196-residue chain is Protein LSM12 homolog A (196 aa).

One can recognise a Sm domain in the interval 3 to 73 (APGPGEYFSV…VSEVDIINDR (71 aa)). In terms of domain architecture, AD spans 81–175 (ASLNISKLAN…IVEKHFRDVE (95 aa)). Positions 174-196 (VESQKTMQRSQAQQTQKDSSLSS) are disordered. Over residues 177–196 (QKTMQRSQAQQTQKDSSLSS) the composition is skewed to polar residues.

Belongs to the LSM12 family.

This is Protein LSM12 homolog A (lsm12a) from Danio rerio (Zebrafish).